Reading from the N-terminus, the 217-residue chain is MMSLGLVGRKVGMTRIFTAEGDSIPVTVLDVSDNRVTQIKTVETDGYTAVQVAFGSRRASRVTKPLAGHLAKAGVEAGEILKEFRIDAAKAAELSNGAVVGADLFEVGQKVDVQGVSIGKGYAGTIKRYNFSSGRATHGNSRSHNVPGSIGMAQDPGRVFPGKRMTGHMGDVTVTVQNLEIARIDAERKLLLVKGAIPGAKGGKVFVTPAVKTKGAK.

The segment covering 134-146 (GRATHGNSRSHNV) has biased composition (polar residues). The interval 134–154 (GRATHGNSRSHNVPGSIGMAQ) is disordered. Gln-154 is modified (N5-methylglutamine).

The protein belongs to the universal ribosomal protein uL3 family. Part of the 50S ribosomal subunit. Forms a cluster with proteins L14 and L19. Post-translationally, methylated by PrmB.

Its function is as follows. One of the primary rRNA binding proteins, it binds directly near the 3'-end of the 23S rRNA, where it nucleates assembly of the 50S subunit. This is Large ribosomal subunit protein uL3 from Burkholderia cenocepacia (strain HI2424).